Consider the following 535-residue polypeptide: Glucose-6-phosphate isomerase (535 aa).

Glutamate 347 acts as the Proton donor in catalysis. Residues histidine 378 and lysine 493 contribute to the active site.

Belongs to the GPI family.

It localises to the cytoplasm. It catalyses the reaction alpha-D-glucose 6-phosphate = beta-D-fructose 6-phosphate. The protein operates within carbohydrate biosynthesis; gluconeogenesis. It participates in carbohydrate degradation; glycolysis; D-glyceraldehyde 3-phosphate and glycerone phosphate from D-glucose: step 2/4. In terms of biological role, catalyzes the reversible isomerization of glucose-6-phosphate to fructose-6-phosphate. This is Glucose-6-phosphate isomerase from Chlamydia felis (strain Fe/C-56) (Chlamydophila felis).